The primary structure comprises 227 residues: Rho-related GTP-binding protein RhoN (227 aa).

Residue 14–21 participates in GTP binding; the sequence is GDAECGKT. Positions 36 to 44 match the Effector region motif; it reads YVPTVFENY. Residues 61-65 and 119-122 each bind GTP; these read DTSGS and CKLD. The disordered stretch occupies residues 186–227; sequence HRQLRRTDSRRGLQRSTQLSGRPDRGNEGEMHKDRAKSCNLM. Residues 207 to 227 show a composition bias toward basic and acidic residues; the sequence is RPDRGNEGEMHKDRAKSCNLM. Cysteine 224 carries the cysteine methyl ester modification. The S-geranylgeranyl cysteine moiety is linked to residue cysteine 224. A propeptide spans 225-227 (removed in mature form); the sequence is NLM.

The protein belongs to the small GTPase superfamily. Rho family. In terms of assembly, interacts with the Rho-GAP domain of RACGAP1. Interacts with UBXD5. Interacts with PRAG1. As to expression, expressed specifically in neurons in the brain and spinal cord and also in hepatic stellate cells.

Its subcellular location is the cytoplasmic vesicle. The protein resides in the secretory vesicle. It is found in the acrosome membrane. May be specifically involved in neuronal and hepatic functions. Is a C3 toxin-insensitive member of the Rho subfamily. In Mus musculus (Mouse), this protein is Rho-related GTP-binding protein RhoN (Rnd2).